The sequence spans 382 residues: DNA replication and repair protein RecF (382 aa).

30–37 (GPNGHGKS) is an ATP binding site.

This sequence belongs to the RecF family.

Its subcellular location is the cytoplasm. In terms of biological role, the RecF protein is involved in DNA metabolism; it is required for DNA replication and normal SOS inducibility. RecF binds preferentially to single-stranded, linear DNA. It also seems to bind ATP. This Magnetococcus marinus (strain ATCC BAA-1437 / JCM 17883 / MC-1) protein is DNA replication and repair protein RecF.